A 1978-amino-acid polypeptide reads, in one-letter code: Sodium channel protein type 8 subunit alpha (1978 aa).

2 disordered regions span residues 1-20 and 28-62; these read MAAR…FTPE and RIAE…LEAG. Residues 1–132 lie on the Cytoplasmic side of the membrane; sequence MAARVLAPPG…RIAIKILIHS (132 aa). Over residues 28-61 the composition is skewed to basic and acidic residues; sequence RIAESKLKKPPKADGSHREDDEDSKPKPNSDLEA. The stretch at 114-442 is one I repeat; it reads ILSPFNLIRR…KAMLEQLKKQ (329 aa). Residues 133-151 traverse the membrane as a helical segment; that stretch reads VFSMIIMCTILTNCVFMTF. Over 152-158 the chain is Extracellular; the sequence is SNPPEWS. Residues 159–179 form a helical membrane-spanning segment; it reads KNVEYTFTGIYTFESLVKIIA. Residues 180–193 are Cytoplasmic-facing; it reads RGFCIDGFTFLRDP. Residues 194 to 211 form a helical membrane-spanning segment; that stretch reads WNWLDFSVIMMAYVTEFV. At 212–217 the chain is on the extracellular side; that stretch reads DLGNVS. A glycan (N-linked (GlcNAc...) asparagine) is linked at Asn215. A helical transmembrane segment spans residues 218–234; it reads ALRTFRVLRALKTISVI. Residues 235 to 253 lie on the Cytoplasmic side of the membrane; that stretch reads PGLKTIVGALIQSVKKLSD. Residues 254 to 273 form a helical membrane-spanning segment; it reads VMILTVFCLSVFALIGLQLF. The Extracellular portion of the chain corresponds to 274-355; that stretch reads MGNLRNKCVV…PNYGYTSFDT (82 aa). Cys281 and Cys333 form a disulfide bridge. Asn289, Asn295, Asn308, and Asn326 each carry an N-linked (GlcNAc...) asparagine glycan. The pore-forming intramembrane region spans 356-380; it reads FSWAFLALFRLMTQDYWENLYQLTL. A Na(+)-binding site is contributed by Glu373. Residues 381-387 are Extracellular-facing; it reads RAAGKTY. Residues 388-408 form a helical membrane-spanning segment; the sequence is MIFFVLVIFVGSFYLVNLILA. The Cytoplasmic segment spans residues 409-751; the sequence is VVAMAYEEQN…EIVNLIVMDP (343 aa). Disordered stretches follow at residues 446 to 530 and 576 to 597; these read AQAA…KAFR and DPGS…SEGR. Positions 473–486 are enriched in low complexity; the sequence is SPRSSSELSKLSSK. Residues 489–500 show a composition bias toward basic residues; sequence KERRNRRKKRKQ. Composition is skewed to basic and acidic residues over residues 501 to 530 and 586 to 597; these read KELS…KAFR and DEHSTVEESEGR. Phosphoserine is present on residues Ser518 and Ser520. The II repeat unit spans residues 733 to 1005; sequence CHPYWIKLKE…QISVIRIKKG (273 aa). The chain crosses the membrane as a helical span at residues 752–770; sequence FVDLAITICIVLNTLFMAM. The Extracellular portion of the chain corresponds to 771–781; the sequence is EHHPMTPQFEH. A helical transmembrane segment spans residues 782-801; it reads VLAVGNLVFTGIFTAEMFLK. Residues 802–815 lie on the Cytoplasmic side of the membrane; sequence LIAMDPYYYFQEGW. Residues 816–835 form a helical membrane-spanning segment; that stretch reads NIFDGFIVSLSLMELGLADV. At 836 to 837 the chain is on the extracellular side; sequence EG. The chain crosses the membrane as a helical span at residues 838–855; it reads LSVLRSFRLLRVFKLAKS. Topologically, residues 856 to 871 are cytoplasmic; that stretch reads WPTLNMLIKIIGNSVG. The chain crosses the membrane as a helical span at residues 872 to 890; the sequence is ALGNLTLVLAIIVFIFAVV. At 891–919 the chain is on the extracellular side; that stretch reads GMQLFGKSYKECVCKISQECKLPRWHMND. A disulfide bond links Cys904 and Cys910. The pore-forming intramembrane region spans 920–940; sequence FFHSFLIVFRVLCGEWIETMW. Na(+) is bound by residues Glu934 and Glu937. Over 941 to 953 the chain is Extracellular; that stretch reads DCMEVAGQAMCLI. A disulfide bond links Cys942 and Cys951. The helical transmembrane segment at 954-974 threads the bilayer; it reads VFMMVMVIGNLVVLNLFLALL. Residues 975–1197 lie on the Cytoplasmic side of the membrane; it reads LSSFSADNLA…TCFLIVEHNW (223 aa). The segment at 1105 to 1146 is disordered; it reads NLNTEDVSSESDPEGSKDKLDDTSSSEGSTIDIKPEVEEVPV. The III repeat unit spans residues 1178-1493; it reads LGKSWWILRK…KKYYNAMKKL (316 aa). A helical transmembrane segment spans residues 1198–1215; that stretch reads FETFIIFMILLSSGALAF. Over 1216-1228 the chain is Extracellular; sequence EDIYIEQRKTIRT. A helical transmembrane segment spans residues 1229–1247; the sequence is ILEYADKVFTYIFILEMLL. The Cytoplasmic segment spans residues 1248–1261; sequence KWTAYGFVKFFTNA. A helical membrane pass occupies residues 1262–1280; that stretch reads WCWLDFLIVAVSLVSLIAN. The Extracellular portion of the chain corresponds to 1281–1288; that stretch reads ALGYSELG. A helical transmembrane segment spans residues 1289-1307; that stretch reads AIKSLRTLRALRPLRALSR. The Cytoplasmic segment spans residues 1308 to 1324; the sequence is FEGMRVVVNALVGAIPS. The chain crosses the membrane as a helical span at residues 1325 to 1344; that stretch reads IMNVLLVCLIFWLIFSIMGV. The Extracellular segment spans residues 1345–1397; the sequence is NLFAGKYHYCFNETSEIRFEIDEVNNKTDCEKLMEGNNTEIRWKNVKINFDNV. Residues Cys1354 and Cys1374 are joined by a disulfide bond. Residues Asn1356, Asn1370, and Asn1381 are each glycosylated (N-linked (GlcNAc...) asparagine). Residues 1398–1419 constitute an intramembrane region (pore-forming); it reads GAGYLALLQVATFKGWMDIMYA. The Extracellular segment spans residues 1420–1436; the sequence is AVDSRKPDEQPDYEGNI. A helical membrane pass occupies residues 1437-1458; it reads YMYIYFVIFIIFGSFFTLNLFI. The Cytoplasmic portion of the chain corresponds to 1459 to 1521; sequence GVIIDNFNQQ…IVFDFVTQQA (63 aa). The residue at position 1495 (Ser1495) is a Phosphoserine; by PKC. The IV repeat unit spans residues 1502–1799; the sequence is IPRPLNKIQG…WEKFDPDATQ (298 aa). A helical membrane pass occupies residues 1522–1539; it reads FDIVIMMLICLNMVTMMV. The Extracellular segment spans residues 1540–1550; that stretch reads ETDTQSKQMEN. A helical transmembrane segment spans residues 1551–1569; sequence ILYWINLVFVIFFTCECVL. Residues 1570–1581 lie on the Cytoplasmic side of the membrane; it reads KMFALRHYYFTI. Residues 1582–1599 traverse the membrane as a helical segment; it reads GWNIFDFVVVILSIVGMF. Over 1600–1612 the chain is Extracellular; the sequence is LADIIEKYFVSPT. Residues 1613–1629 traverse the membrane as a helical segment; sequence LFRVIRLARIGRILRLI. Residues 1630–1648 lie on the Cytoplasmic side of the membrane; it reads KGAKGIRTLLFALMMSLPA. Residues 1649 to 1666 form a helical membrane-spanning segment; it reads LFNIGLLLFLVMFIFSIF. Residues 1667 to 1688 are Extracellular-facing; it reads GMSNFAYVKHEAGIDDMFNFET. Residues 1689-1711 constitute an intramembrane region (pore-forming); the sequence is FGNSMICLFQITTSAGWDGLLLP. Over 1712–1740 the chain is Extracellular; it reads ILNRPPDCSLDKEHPGSGFKGDCGNPSVG. Cys1719 and Cys1734 are disulfide-bonded. A helical membrane pass occupies residues 1741–1763; the sequence is IFFFVSYIIISFLIVVNMYIAII. Residues 1764–1978 are Cytoplasmic-facing; that stretch reads LENFSVATEE…RQKEVRESKC (215 aa). In terms of domain architecture, IQ spans 1893–1922; the sequence is EEVSAVVLQRAYRGHLARRGFICRKITSNK. Positions 1924-1978 are disordered; that stretch reads ENGGTHREKKESTPSTASLPSYDSVTKPDKEKQQRAEEGRRERAKRQKEVRESKC. The span at 1936 to 1947 shows a compositional bias: polar residues; sequence TPSTASLPSYDS. The segment covering 1949–1978 has biased composition (basic and acidic residues); sequence TKPDKEKQQRAEEGRRERAKRQKEVRESKC.

Belongs to the sodium channel (TC 1.A.1.10) family. Nav1.6/SCN8A subfamily. As to quaternary structure, the voltage-sensitive sodium channel consists of an ion-conducting pore-forming alpha subunit regulated by one or more beta-1 (SCN1B), beta-2 (SCN2B), beta-3 (SCN3B) and/or beta-4 (SCN4B) subunits. Beta-1 (SCN1B) and beta-3 (SCN3B) are non-covalently associated with alpha, while beta-2 (SCN2B) and beta-4 (SCN4B) are covalently linked by disulfide bonds. Interacts with FGF13. Interacts with NEDD4 and NEDD4L. Interacts with FGF14, GBG3, GBB2 and SCN1B. Interacts with TMEM233. Interacts with the conotoxin GVIIJ. Interacts with the scorpion toxin BMK M1. Interacts with CALM1; the interaction modulates the inactivation rate of SCN8A. Post-translationally, may be ubiquitinated by NEDD4L; which would promote its endocytosis. In terms of processing, phosphorylation at Ser-1495 by PKC in a highly conserved cytoplasmic loop slows inactivation of the sodium channel and reduces peak sodium currents. As to expression, expressed in the hippocampus (at protein level). Expressed in brain, cerebellum and spinal cord. Expressed in non-neuronal tissues, such as monocytes/macrophages.

It localises to the cell membrane. Its subcellular location is the cell projection. It is found in the axon. The protein resides in the cytoplasmic vesicle. The protein localises to the podosome. It carries out the reaction Na(+)(in) = Na(+)(out). Its function is as follows. Pore-forming subunit of a voltage-gated sodium channel complex assuming opened or closed conformations in response to the voltage difference across membranes and through which sodium ions selectively pass along their electrochemical gradient. Contributes to neuronal excitability by regulating action potential threshold and propagation. In terms of biological role, more specifically expressed in non-neuronal cells, could play a role in sodium release from intracellular compartments and participate in the control of podosomes formation and macrophages adhesion and movement. This chain is Sodium channel protein type 8 subunit alpha, found in Mus musculus (Mouse).